Reading from the N-terminus, the 1298-residue chain is MLILRGAPALSAFRHSKLLEQLKQKVSAVSGLYAEFAHFADVNDVLTSEEQQVLDRLLKYGPSVPVQEPSGRLFLVLPRFGTISPWSSKASDIARNCGLTKIQRIERGIAFYVEGQFSEAQAQAIADSLHDRMTQLVLGDHEQAASLFSHAQPKPLTAVDILGGGRAALEKANVELGLALAEDEIDYLITSFNGLGRNPHDIELMMFAQANSEHCRHKIFNASWDIDGQSQEKSLFGMIKNTYQMHSEGVLSAYKDNASVIVGNVAGRFFPDPETRQYGAVQEPVHILMKVETHNHPTAIAPFPGAATGSGGEIRDEGATGRGAKPKAGLTGFTVSNLQIPGFVQPWEVPYGKPERIVTALDIMIEGPLGGAAFNNEFGRPALTGYFRTFEQSITTPHGDEVRGYHKPIMLAGGMGNIREDHVQKGEITVGSKLIVLGGPAMLIGLGGGAASSMATGTSSADLDFASVQRENPEMERRCQEVIDRCWQLGDRNPISFIHDVGAGGLSNAFPELVNDGDRGGRFELRNVPNDEPGMAPLEIWSNESQERYVLAVGVEDFDRFKAICERERCPFAVVGEATAEPQLTVTDSHFGNSPVDMPLEVLLGKVPRMHRSVEREAEIGDDFDPSTLDIEESVQRVLRHPAVASKSFLITIGDRSITGLVARDQMVGPWQVPVADCAVTATSFDVNTGEAMAMGERTPLALLDAPASGRMAIGETLTNIAASCIEKLSDIKLSANWMSAAGHPGEDARLYDTVKAVGMELCPELGITIPVGKDSMSMKTRWSDEGTEKSVTSPLSLIVTGFAPVVDIRQTLTPELRMDKGITDLILIDLGRGQNRMGASILAQTHGKLGRVAPDVDDAEDLKAFFAVIQGLNSDGHILSYHDRSDGGLLVSTLEMAFAGHCGLNLHLDGVADNVSELSAILFNEELGAVIQVRQDATPLVLAQFSAAGLEDCVAVIGQPINNDEVSISFHGEPVFSGQRRLLQRQWAETSYQIQRLRDNAECADQEFDALLEEDNPGLTVKLGFDVNEDIAAPYIKTGVRPQVAVLREQGVNGQVEMAAAFDRAGFNAIDVHMSDILAGRVDLNDFKGMVACGGFSYGDVLGAGEGWAKSALFNSRARDAFQGFFERADSFTLGVCNGCQMLSNLHELIPGSEFWPHFVRNRSEQFEARVAMVQVQESASIFLQGMAGSRMPIAIAHGEGHAEFRNDDALLEADVSGTVALRFVDNHGKVTETYPANPNGSPRGIGGMTTLDGRVTIMMPHPERVFRAVQNSWRPEDWNEDAAWMRMFRNARAWVN.

The tract at residues 303–327 is disordered; it reads FPGAATGSGGEIRDEGATGRGAKPK. ATP is bound by residues 305–316, 384–386, and Ala-676; these read GAATGSGGEIRD and TGY. Asp-677, Glu-716, Asn-720, and Asp-884 together coordinate Mg(2+). Ser-886 serves as a coordination point for ATP. In terms of domain architecture, Glutamine amidotransferase type-1 spans 1045-1298; it reads VAVLREQGVN…MFRNARAWVN (254 aa). Cys-1138 acts as the Nucleophile in catalysis. Catalysis depends on residues His-1263 and Glu-1265.

The protein in the N-terminal section; belongs to the FGAMS family. Monomer.

It localises to the cytoplasm. It carries out the reaction N(2)-formyl-N(1)-(5-phospho-beta-D-ribosyl)glycinamide + L-glutamine + ATP + H2O = 2-formamido-N(1)-(5-O-phospho-beta-D-ribosyl)acetamidine + L-glutamate + ADP + phosphate + H(+). The protein operates within purine metabolism; IMP biosynthesis via de novo pathway; 5-amino-1-(5-phospho-D-ribosyl)imidazole from N(2)-formyl-N(1)-(5-phospho-D-ribosyl)glycinamide: step 1/2. Its function is as follows. Phosphoribosylformylglycinamidine synthase involved in the purines biosynthetic pathway. Catalyzes the ATP-dependent conversion of formylglycinamide ribonucleotide (FGAR) and glutamine to yield formylglycinamidine ribonucleotide (FGAM) and glutamate. This Pseudomonas savastanoi pv. phaseolicola (strain 1448A / Race 6) (Pseudomonas syringae pv. phaseolicola (strain 1448A / Race 6)) protein is Phosphoribosylformylglycinamidine synthase.